A 491-amino-acid chain; its full sequence is Transcription factor unc-3 (491 aa).

The segment at 66 to 69 (RKSN) is interaction with DNA. The C5-type zinc-finger motif lies at 154-173 (CRVLLTHEVMCSRCCEKKSC). 2 interaction with DNA regions span residues 200-207 (NCLKNAGN) and 239-242 (NNSK). The tract at residues 240-261 (NSKHGRRTKRTDASDDSEYSES) is disordered. Residues 269–355 (PVIKALFPSE…SRGTPLRFSY (87 aa)) form the IPT/TIG domain.

The protein belongs to the COE family. In terms of assembly, may homodimerise. Interacts with jmjd-3.1. May interact with GFI1 homolog pag-3.

The protein resides in the nucleus. Functionally, transcription factor. Involved in motor neuron fate determination and maintenance, acting as an activator of gene expression in a subset of motor neurons. May act in concert with GFI1 homolog pag-3 in motor neuron fate determination. Required to maintain the expression of transcriptional repressors bnc-1 and cfi-1, which play roles in the cell fate of motor neurons. May play a role in the expression of proteins essential for axonal pathfinding and/or neuronal differentiation in both sensory and motor neurons. Cooperates with jmjd-3.1 and wdr-5.1 to ensure robust transdifferentiation of the Y rectal cell to the PDA motor neuron during larval development. The chain is Transcription factor unc-3 (unc-3) from Caenorhabditis elegans.